A 198-amino-acid polypeptide reads, in one-letter code: Elongation factor Ts (198 aa).

The involved in Mg(2+) ion dislocation from EF-Tu stretch occupies residues 81–84; that stretch reads TDFV.

The protein belongs to the EF-Ts family.

The protein resides in the cytoplasm. Functionally, associates with the EF-Tu.GDP complex and induces the exchange of GDP to GTP. It remains bound to the aminoacyl-tRNA.EF-Tu.GTP complex up to the GTP hydrolysis stage on the ribosome. This Pseudothermotoga lettingae (strain ATCC BAA-301 / DSM 14385 / NBRC 107922 / TMO) (Thermotoga lettingae) protein is Elongation factor Ts.